We begin with the raw amino-acid sequence, 60 residues long: Cecropin-B1 (60 aa).

An N-terminal signal peptide occupies residues 1–24 (MNFSKVFALVLLIGLVLLTGHTEA).

This sequence belongs to the cecropin family.

The protein localises to the secreted. Functionally, putative antimicrobial peptide. Partially neutralizes lipopolysaccharides (LPS). Exhibits anti-inflammatory properties: inhibits LPS-induced iNOS/NOS2 transcription, nitric oxide (NO) and pro-inflammatory cytokine production in mouse macrophages and human peripheral blood mononuclear cells (PBMCs); inhibits LPS-induced activation of MAPK and NF-kappa-B signaling pathways in mouse macrophages. The chain is Cecropin-B1 from Aedes aegypti (Yellowfever mosquito).